Reading from the N-terminus, the 307-residue chain is Transaldolase (307 aa).

Lys-125 functions as the Schiff-base intermediate with substrate in the catalytic mechanism.

The protein belongs to the transaldolase family. Type 1 subfamily. As to quaternary structure, homodimer.

It is found in the cytoplasm. It carries out the reaction D-sedoheptulose 7-phosphate + D-glyceraldehyde 3-phosphate = D-erythrose 4-phosphate + beta-D-fructose 6-phosphate. The protein operates within carbohydrate degradation; pentose phosphate pathway; D-glyceraldehyde 3-phosphate and beta-D-fructose 6-phosphate from D-ribose 5-phosphate and D-xylulose 5-phosphate (non-oxidative stage): step 2/3. Functionally, transaldolase is important for the balance of metabolites in the pentose-phosphate pathway. In Pseudomonas paraeruginosa (strain DSM 24068 / PA7) (Pseudomonas aeruginosa (strain PA7)), this protein is Transaldolase.